Here is a 312-residue protein sequence, read N- to C-terminus: MDGENHSVVSEFLFLGLTHSWEIQLLLLVFSSVLYVASITGNILIVFSVTTDPHLHSPMYFLLASLSFIDLGACSVTSPKMIYDLFRKRKVISFGGCIAQIFFIHVVGGVEMVLLIAMAFDRYVALCKPLHYLTIMSPRMCLSFLAVAWTLGVSHSLFQLAFLVNLAFCGPNVLDSFYCDLPRLLRLACTDTYRLQFMVTVNSGFICVGTFFILLISYVFILFTVWKHSSGGSSKALSTLSAHSTVVLLFFGPPMFVYTRPHPNSQMDKFLAIFDAVLTPFLNPVVYTFRNKEMKAAIKRVCKQLVIYKRIS.

The Extracellular segment spans residues 1-25; sequence MDGENHSVVSEFLFLGLTHSWEIQL. The N-linked (GlcNAc...) asparagine glycan is linked to N5. A helical membrane pass occupies residues 26-49; sequence LLLVFSSVLYVASITGNILIVFSV. The Cytoplasmic portion of the chain corresponds to 50 to 57; the sequence is TTDPHLHS. A helical transmembrane segment spans residues 58-79; sequence PMYFLLASLSFIDLGACSVTSP. Topologically, residues 80-100 are extracellular; the sequence is KMIYDLFRKRKVISFGGCIAQ. C97 and C189 are joined by a disulfide. A helical membrane pass occupies residues 101–120; sequence IFFIHVVGGVEMVLLIAMAF. Over 121–139 the chain is Cytoplasmic; sequence DRYVALCKPLHYLTIMSPR. The helical transmembrane segment at 140-158 threads the bilayer; the sequence is MCLSFLAVAWTLGVSHSLF. At 159 to 195 the chain is on the extracellular side; the sequence is QLAFLVNLAFCGPNVLDSFYCDLPRLLRLACTDTYRL. Residues 196–219 form a helical membrane-spanning segment; it reads QFMVTVNSGFICVGTFFILLISYV. The Cytoplasmic segment spans residues 220–235; the sequence is FILFTVWKHSSGGSSK. A helical transmembrane segment spans residues 236-258; sequence ALSTLSAHSTVVLLFFGPPMFVY. Residues 259-269 are Extracellular-facing; it reads TRPHPNSQMDK. The chain crosses the membrane as a helical span at residues 270–289; the sequence is FLAIFDAVLTPFLNPVVYTF. Topologically, residues 290–312 are cytoplasmic; the sequence is RNKEMKAAIKRVCKQLVIYKRIS.

It belongs to the G-protein coupled receptor 1 family.

Its subcellular location is the cell membrane. Its function is as follows. Odorant receptor. This chain is Olfactory receptor 4F3/4F16/4F29 (OR4F3), found in Homo sapiens (Human).